The following is a 718-amino-acid chain: Centromere/kinetochore protein zw10 (718 aa).

Belongs to the ZW10 family.

It is found in the cytoplasm. It localises to the nucleus. Its subcellular location is the chromosome. The protein localises to the centromere. The protein resides in the kinetochore. Required for accurate chromosome segregation. The protein is Centromere/kinetochore protein zw10 (mit(1)15) of Drosophila pseudoobscura pseudoobscura (Fruit fly).